A 520-amino-acid chain; its full sequence is Calcium-dependent protein kinase 25 (520 aa).

Gly2 is lipidated: N-myristoyl glycine. The disordered stretch occupies residues 31–87 (PLKPQLQDKPPQPMLMNKDDDKTKLNDTHGDPKLLEGKEKPAQKQTSQGQGGRKCSD). Residues 47-72 (NKDDDKTKLNDTHGDPKLLEGKEKPA) are compositionally biased toward basic and acidic residues. The region spanning 132–390 (YNLGSKLGHG…AQQVLCHPWI (259 aa)) is the Protein kinase domain. ATP-binding positions include 138–146 (LGHGQFGTT) and Lys161. Asp256 functions as the Proton acceptor in the catalytic mechanism. Ser296 carries the post-translational modification Phosphoserine. The segment at 396 to 426 (APDTPLDTTVLSRLKKFSATDKLKKMALRVI) is autoinhibitory domain. The 36-residue stretch at 433 to 468 (EEIHELRETFKTIDSGKSGRVTYKELKNGLERFNTN) folds into the EF-hand 1 domain. Ca(2+) contacts are provided by Asp446, Ser450, Arg452, Glu457, Asp483, Glu487, Thr489, and Glu494. In terms of domain architecture, EF-hand 2; degenerate spans 469–505 (LDNSDINSLMQIPTDVHLEDTVDYNEFIEAIVRLRQI).

This sequence belongs to the protein kinase superfamily. Ser/Thr protein kinase family. CDPK subfamily.

It is found in the membrane. It carries out the reaction L-seryl-[protein] + ATP = O-phospho-L-seryl-[protein] + ADP + H(+). The catalysed reaction is L-threonyl-[protein] + ATP = O-phospho-L-threonyl-[protein] + ADP + H(+). Activated by calcium. Autophosphorylation may play an important role in the regulation of the kinase activity. Functionally, may play a role in signal transduction pathways that involve calcium as a second messenger. The protein is Calcium-dependent protein kinase 25 (CPK25) of Arabidopsis thaliana (Mouse-ear cress).